Here is a 294-residue protein sequence, read N- to C-terminus: tRNA pseudouridine synthase B (294 aa).

Asp-38 serves as the catalytic Nucleophile.

Belongs to the pseudouridine synthase TruB family. Type 1 subfamily.

The enzyme catalyses uridine(55) in tRNA = pseudouridine(55) in tRNA. Its function is as follows. Responsible for synthesis of pseudouridine from uracil-55 in the psi GC loop of transfer RNAs. The protein is tRNA pseudouridine synthase B of Clostridium perfringens (strain SM101 / Type A).